Consider the following 224-residue polypeptide: Germin-like protein 8-4 (224 aa).

Residues 1–23 form the signal peptide; the sequence is MASSSSLYLLAALLALASWQAIA. Residues Cys33 and Cys48 are joined by a disulfide bond. The Cupin type-1 domain maps to 70 to 213; it reads STMNKVGSNV…AFQVEKKVID (144 aa). Asn78 carries N-linked (GlcNAc...) asparagine glycosylation. Mn(2+) contacts are provided by His111, His113, Glu118, and His158.

The protein belongs to the germin family. As to quaternary structure, oligomer (believed to be a pentamer but probably hexamer).

It is found in the secreted. It localises to the extracellular space. Its subcellular location is the apoplast. Functionally, plays a role in broad-spectrum disease resistance. Probably has no oxalate oxidase activity even if the active site is conserved. This chain is Germin-like protein 8-4 (GER1), found in Oryza sativa subsp. japonica (Rice).